A 116-amino-acid chain; its full sequence is Large ribosomal subunit protein bL20 (116 aa).

This sequence belongs to the bacterial ribosomal protein bL20 family.

Functionally, binds directly to 23S ribosomal RNA and is necessary for the in vitro assembly process of the 50S ribosomal subunit. It is not involved in the protein synthesizing functions of that subunit. This Nitratiruptor sp. (strain SB155-2) protein is Large ribosomal subunit protein bL20.